We begin with the raw amino-acid sequence, 288 residues long: NAD(P)H-hydrate epimerase (288 aa).

Residues 1–32 (MSGLRALLGLGLLVAGSRLSRVRVQAGSCRAG) constitute a mitochondrion transit peptide. S49 carries the phosphoserine modification. The 211-residue stretch at 65–275 (AQAVDQELFN…ALEKKYQLNL (211 aa)) folds into the YjeF N-terminal domain. 119 to 123 (NNGGD) lines the (6S)-NADPHX pocket. K(+) is bound at residue N120. K144 bears the N6-succinyllysine mark. D185 contributes to the K(+) binding site. (6S)-NADPHX is bound by residues 189–195 (GFSFTGE) and D218. S221 contributes to the K(+) binding site.

Belongs to the NnrE/AIBP family. Homodimer. Interacts with APOA1 and APOA2. K(+) is required as a cofactor. Post-translationally, undergoes physiological phosphorylation during sperm capacitation, downstream to PKA activation.

The protein resides in the mitochondrion. It localises to the secreted. It carries out the reaction (6R)-NADHX = (6S)-NADHX. The enzyme catalyses (6R)-NADPHX = (6S)-NADPHX. Its function is as follows. Catalyzes the epimerization of the S- and R-forms of NAD(P)HX, a damaged form of NAD(P)H that is a result of enzymatic or heat-dependent hydration. This is a prerequisite for the S-specific NAD(P)H-hydrate dehydratase to allow the repair of both epimers of NAD(P)HX. Accelerates cholesterol efflux from endothelial cells to high-density lipoprotein (HDL) and thereby regulates angiogenesis. This is NAD(P)H-hydrate epimerase from Bos taurus (Bovine).